A 757-amino-acid chain; its full sequence is Alcohol dehydrogenase (quinone), dehydrogenase subunit (757 aa).

The signal sequence occupies residues 1 to 34 (MTSGLLTPIKVTKKRLLSCAAALAFSAAVPVAFA). At Gln-35 the chain carries Pyrrolidone carboxylic acid. Glu-95 contributes to the pyrroloquinoline quinone binding site. Cys-141 and Cys-142 are oxidised to a cystine. Arg-147 serves as a coordination point for pyrroloquinoline quinone. Glu-215 contributes to the Ca(2+) binding site. A pyrroloquinoline quinone-binding site is contributed by Thr-277. Residues Asn-297 and Asp-342 each coordinate Ca(2+). Catalysis depends on Asp-342, which acts as the Proton acceptor. Lys-369 and Ile-588 together coordinate pyrroloquinoline quinone. The 80-residue stretch at 640–719 (ARQKDGYFMY…DIRNFIVKRA (80 aa)) folds into the Cytochrome c domain. Residues Cys-653, Cys-656, His-657, and Met-696 each contribute to the heme c site. Positions 726–757 (EVKARENSTGVPNDQFLNVPQSTADVPTADHP) are disordered. The span at 732–750 (NSTGVPNDQFLNVPQSTAD) shows a compositional bias: polar residues.

This sequence belongs to the bacterial PQQ dehydrogenase family. In terms of assembly, the alcohol dehydrogenase multicomponent enzyme system is composed of a dehydrogenase subunit I (AdhA), a cytochrome c subunit II (AdhB) and a subunit III (AdhS). It depends on pyrroloquinoline quinone as a cofactor. Requires Ca(2+) as cofactor. The cofactor is heme c.

The protein localises to the cell membrane. It catalyses the reaction ethanol + a ubiquinone = a ubiquinol + acetaldehyde. 2,6-dichloro-4-dicyanovinylphenol (PC16) and antimycin A inhibit ubiquinol oxidation activity more selectively than the ubiquinone reductase activity. In terms of biological role, dehydrogenase component of the alcohol dehydrogenase multicomponent enzyme system which is involved in the production of acetic acid and in the ethanol oxidase respiratory chain. Quinohemoprotein alcohol dehydrogenase (ADH) catalyzes the oxidation of ethanol to acetaldehyde by transferring electrons to the ubiquinone embedded in the membrane phospholipids. The electrons transfer from ethanol to membranous ubiquinone occurs from pyrroloquinoline quinone (PQQ) to one heme c in subunit I (AdhA), and finally to two heme c in subunit II (AdhB). Besides ubiquinone reduction, ADH also has a ubiquinol (QH2) oxidation reaction which mediates electron transfer from ubiquinol to the non-energy generating bypass oxidase system. The electrons transfer occurs from ubiquinol (QH2) to the additional heme c within subunit II (AdhB). Also able to use quinone analogs such as 2,3-dimethoxy-5-methyl-6-n-decyl-1,4-benzoquinone (DB) and 2,3-dimethoxy-5-methyl-6-n-pentyl-1,4-benzoquinone (PB). This Gluconobacter oxydans (strain 621H) (Gluconobacter suboxydans) protein is Alcohol dehydrogenase (quinone), dehydrogenase subunit.